Here is a 212-residue protein sequence, read N- to C-terminus: Prolactin (212 aa).

Positions 1–24 (MAQRKTNGSKLFMMVLYMVAACSA) are cleaved as a signal peptide. 2 disulfide bridges follow: C70–C185 and C202–C212.

The protein belongs to the somatotropin/prolactin family. Pituitary gland.

It is found in the secreted. The sequence is that of Prolactin (prl) from Dicentrarchus labrax (European seabass).